The primary structure comprises 348 residues: MDEWIAEFIKRIILKLPFSQTMTILKAWGFLTDSELQTLTLRYPKDITATEVVRLCEAKNATIDHAAALDFVFNHAFSNKKLWTVYQMSKTSESENDLFDASEFKLQFKKSIHAVSKNVTINFKEFGEALWIRIAWGTHNTRPNQYKATFAVYHSQTPHVFITGLGKACRPLLCQALVIASKYSQIQEMELKSRCLESLKDIVFKRFNQPFSSHHSRPHEKALTQKIVDPRVTYENMREKERVHHLTRETFGEGPLPKLELASYKLETMFRAESIMGGNLTAGNEPFRCVVKFSSPHLLEAIRSLAPAGIAEAPISTLLSCIPHKARNSFKITEKRGLHPASSQPTNF.

It belongs to the CENP-N/CHL4 family.

The protein localises to the nucleus. It localises to the chromosome. The protein resides in the centromere. Its function is as follows. Probable component of a centromeric complex involved in assembly of kinetochore proteins, mitotic progression and chromosome segregation. The chain is Centromere protein N (cenpn) from Xenopus tropicalis (Western clawed frog).